The primary structure comprises 105 residues: Pyrimidine/purine nucleoside phosphorylase (105 aa).

The protein belongs to the nucleoside phosphorylase PpnP family.

It catalyses the reaction a purine D-ribonucleoside + phosphate = a purine nucleobase + alpha-D-ribose 1-phosphate. The catalysed reaction is adenosine + phosphate = alpha-D-ribose 1-phosphate + adenine. The enzyme catalyses cytidine + phosphate = cytosine + alpha-D-ribose 1-phosphate. It carries out the reaction guanosine + phosphate = alpha-D-ribose 1-phosphate + guanine. It catalyses the reaction inosine + phosphate = alpha-D-ribose 1-phosphate + hypoxanthine. The catalysed reaction is thymidine + phosphate = 2-deoxy-alpha-D-ribose 1-phosphate + thymine. The enzyme catalyses uridine + phosphate = alpha-D-ribose 1-phosphate + uracil. It carries out the reaction xanthosine + phosphate = alpha-D-ribose 1-phosphate + xanthine. Its function is as follows. Catalyzes the phosphorolysis of diverse nucleosides, yielding D-ribose 1-phosphate and the respective free bases. Can use uridine, adenosine, guanosine, cytidine, thymidine, inosine and xanthosine as substrates. Also catalyzes the reverse reactions. In Delftia acidovorans (strain DSM 14801 / SPH-1), this protein is Pyrimidine/purine nucleoside phosphorylase.